Consider the following 419-residue polypeptide: MHFVDEAFNEVFAGNGGHGIVAFRREKYVAFGGPAGGNGGNGGSVIFVGDKGENTLLKLKYQKHLKAPHGINGKNKGQNGANAPHLYVKVPLGTVFYTADNKFLGEILYDQQTLVIAKGGKGGKGNKALATFKNQAPSYSEKGDLGESFKIKTELKVLADIGLLGFPSVGKSSLISAISKAQPKVASYPFTTIKPHLGVVEVDGFSFVVADLPGLIENAHLGCGMGIQFLKHIERCRVLVHILSMESSNPYQDFQTLNQELKQYNPQLLLKKQIIVTNKMDLPDSLKKLTLLKQKIKGQPIIPLSLVSFDNLEILKYKMSSFLQNTPLEVNPNNNNDFKLYTLTDNLKTISVIKESDSVFVVSGNQVEIFFHRTDFNNEESVKRFNRILKKIGMEEQLQKKGAKPGDQVKICDRLFDFL.

The 158-residue stretch at 1–158 (MHFVDEAFNE…FKIKTELKVL (158 aa)) folds into the Obg domain. Residues 159-324 (ADIGLLGFPS…LKYKMSSFLQ (166 aa)) form the OBG-type G domain. GTP-binding positions include 165 to 172 (GFPSVGKS), 190 to 194 (FTTIK), 211 to 214 (DLPG), 278 to 281 (NKMD), and 305 to 307 (SLV). Serine 172 and threonine 192 together coordinate Mg(2+). Residues 342-419 (TLTDNLKTIS…KICDRLFDFL (78 aa)) form the OCT domain.

This sequence belongs to the TRAFAC class OBG-HflX-like GTPase superfamily. OBG GTPase family. In terms of assembly, monomer. The cofactor is Mg(2+).

The protein localises to the cytoplasm. An essential GTPase which binds GTP, GDP and possibly (p)ppGpp with moderate affinity, with high nucleotide exchange rates and a fairly low GTP hydrolysis rate. Plays a role in control of the cell cycle, stress response, ribosome biogenesis and in those bacteria that undergo differentiation, in morphogenesis control. In Aster yellows witches'-broom phytoplasma (strain AYWB), this protein is GTPase Obg.